Reading from the N-terminus, the 501-residue chain is GMP synthase [glutamine-hydrolyzing] (501 aa).

Positions 1–185 (MVLVVDYGSQ…LFNVCKLEKN (185 aa)) constitute a Glutamine amidotransferase type-1 domain. The active-site Nucleophile is Cys-75. Residues His-159 and Glu-161 contribute to the active site. The GMPS ATP-PPase domain occupies 186-376 (WKIGDLVEEK…LGIPDRIINR (191 aa)). 213–219 (SGGVDSS) lines the ATP pocket.

In terms of assembly, homodimer.

It carries out the reaction XMP + L-glutamine + ATP + H2O = GMP + L-glutamate + AMP + diphosphate + 2 H(+). The protein operates within purine metabolism; GMP biosynthesis; GMP from XMP (L-Gln route): step 1/1. Functionally, catalyzes the synthesis of GMP from XMP. This Thermotoga maritima (strain ATCC 43589 / DSM 3109 / JCM 10099 / NBRC 100826 / MSB8) protein is GMP synthase [glutamine-hydrolyzing] (guaA).